Reading from the N-terminus, the 303-residue chain is Signal recognition particle receptor FtsY (303 aa).

GTP contacts are provided by residues 108–115, 190–194, and 254–257; these read GVNGAGKT, DTAGR, and TKLD.

Belongs to the GTP-binding SRP family. FtsY subfamily. As to quaternary structure, part of the signal recognition particle protein translocation system, which is composed of SRP and FtsY. SRP is a ribonucleoprotein composed of Ffh and a 4.5S RNA molecule.

The protein localises to the cell inner membrane. It localises to the cytoplasm. It carries out the reaction GTP + H2O = GDP + phosphate + H(+). Its function is as follows. Involved in targeting and insertion of nascent membrane proteins into the cytoplasmic membrane. Acts as a receptor for the complex formed by the signal recognition particle (SRP) and the ribosome-nascent chain (RNC). Interaction with SRP-RNC leads to the transfer of the RNC complex to the Sec translocase for insertion into the membrane, the hydrolysis of GTP by both Ffh and FtsY, and the dissociation of the SRP-FtsY complex into the individual components. This chain is Signal recognition particle receptor FtsY, found in Rickettsia bellii (strain RML369-C).